The primary structure comprises 273 residues: Large ribosomal subunit protein uL2cz/uL2cy (273 aa).

Disordered stretches follow at residues 1–23 (MAIHLYKTSTPSTRNGAVDSQVK) and 224–273 (NPVD…RRRK).

The protein belongs to the universal ribosomal protein uL2 family. Part of the 50S ribosomal subunit.

The protein resides in the plastid. It is found in the chloroplast. The protein is Large ribosomal subunit protein uL2cz/uL2cy (rpl2-A) of Amborella trichopoda.